We begin with the raw amino-acid sequence, 115 residues long: MKSYLKTLIFFPLILQIVVTALLIWFDDDSSGVIVPFSSYALTAFLLAAIPAFLTALLAAKFRYTRYNIASIVLVSSIISFVYCNMASYFYLLLLGEQDTSFWGWLTEGGLSLGL.

3 helical membrane-spanning segments follow: residues 7-27 (TLIF…IWFD), 40-60 (YALT…LLAA), and 72-92 (IVLV…YFYL).

It is found in the cell membrane. This is an uncharacterized protein from Haemophilus influenzae (strain ATCC 51907 / DSM 11121 / KW20 / Rd).